The primary structure comprises 29 residues: Toxin Bl-4 (29 aa).

Belongs to the long (4 C-C) scorpion toxin superfamily. Sodium channel inhibitor family. Beta subfamily. In terms of tissue distribution, expressed by the venom gland.

It localises to the secreted. Functionally, excitatory insect beta-toxins induce a spastic paralysis. They bind voltage-independently at site-4 of sodium channels (Nav) and shift the voltage of activation toward more negative potentials thereby affecting sodium channel activation and promoting spontaneous and repetitive firing. The fraction to which this protein belongs exhibits low toxicity and induces transient paralysis in all insects tested (the crickets A.domesticus). In Buthacus leptochelys (Egyptian fat-tailed scorpion), this protein is Toxin Bl-4.